A 300-amino-acid chain; its full sequence is tRNA U34 carboxymethyltransferase (300 aa).

Carboxy-S-adenosyl-L-methionine-binding positions include Lys73, Trp87, Lys92, Gly111, 133–135 (DPS), 160–161 (VE), Tyr180, and Arg293.

The protein belongs to the class I-like SAM-binding methyltransferase superfamily. CmoB family. In terms of assembly, homotetramer.

It carries out the reaction carboxy-S-adenosyl-L-methionine + 5-hydroxyuridine(34) in tRNA = 5-carboxymethoxyuridine(34) in tRNA + S-adenosyl-L-homocysteine + H(+). In terms of biological role, catalyzes carboxymethyl transfer from carboxy-S-adenosyl-L-methionine (Cx-SAM) to 5-hydroxyuridine (ho5U) to form 5-carboxymethoxyuridine (cmo5U) at position 34 in tRNAs. The protein is tRNA U34 carboxymethyltransferase of Nautilia profundicola (strain ATCC BAA-1463 / DSM 18972 / AmH).